The sequence spans 290 residues: 4-hydroxy-3-methylbut-2-enyl diphosphate reductase (290 aa).

Cys13 is a binding site for [4Fe-4S] cluster. (2E)-4-hydroxy-3-methylbut-2-enyl diphosphate-binding residues include His41 and His75. His41 and His75 together coordinate dimethylallyl diphosphate. Isopentenyl diphosphate contacts are provided by His41 and His75. Residue Cys97 participates in [4Fe-4S] cluster binding. His129 serves as a coordination point for (2E)-4-hydroxy-3-methylbut-2-enyl diphosphate. Position 129 (His129) interacts with dimethylallyl diphosphate. Residue His129 coordinates isopentenyl diphosphate. Glu131 (proton donor) is an active-site residue. Residue Thr167 participates in (2E)-4-hydroxy-3-methylbut-2-enyl diphosphate binding. Cys198 lines the [4Fe-4S] cluster pocket. Ser226, Ser227, Asn228, and Ser270 together coordinate (2E)-4-hydroxy-3-methylbut-2-enyl diphosphate. Residues Ser226, Ser227, Asn228, and Ser270 each coordinate dimethylallyl diphosphate. The isopentenyl diphosphate site is built by Ser226, Ser227, Asn228, and Ser270.

This sequence belongs to the IspH family. [4Fe-4S] cluster is required as a cofactor.

The catalysed reaction is isopentenyl diphosphate + 2 oxidized [2Fe-2S]-[ferredoxin] + H2O = (2E)-4-hydroxy-3-methylbut-2-enyl diphosphate + 2 reduced [2Fe-2S]-[ferredoxin] + 2 H(+). The enzyme catalyses dimethylallyl diphosphate + 2 oxidized [2Fe-2S]-[ferredoxin] + H2O = (2E)-4-hydroxy-3-methylbut-2-enyl diphosphate + 2 reduced [2Fe-2S]-[ferredoxin] + 2 H(+). It participates in isoprenoid biosynthesis; dimethylallyl diphosphate biosynthesis; dimethylallyl diphosphate from (2E)-4-hydroxy-3-methylbutenyl diphosphate: step 1/1. It functions in the pathway isoprenoid biosynthesis; isopentenyl diphosphate biosynthesis via DXP pathway; isopentenyl diphosphate from 1-deoxy-D-xylulose 5-phosphate: step 6/6. Its function is as follows. Catalyzes the conversion of 1-hydroxy-2-methyl-2-(E)-butenyl 4-diphosphate (HMBPP) into a mixture of isopentenyl diphosphate (IPP) and dimethylallyl diphosphate (DMAPP). Acts in the terminal step of the DOXP/MEP pathway for isoprenoid precursor biosynthesis. In Bacteroides fragilis (strain ATCC 25285 / DSM 2151 / CCUG 4856 / JCM 11019 / LMG 10263 / NCTC 9343 / Onslow / VPI 2553 / EN-2), this protein is 4-hydroxy-3-methylbut-2-enyl diphosphate reductase.